Reading from the N-terminus, the 827-residue chain is Probable beta-glucosidase H (827 aa).

Asp-223 is an active-site residue. In terms of domain architecture, PA14 spans 387–546 (RLLTNAVMHF…DSAEMVRSAV (160 aa)). Residues Asn-471, Asn-594, Asn-600, and Asn-625 are each glycosylated (N-linked (GlcNAc...) asparagine).

It belongs to the glycosyl hydrolase 3 family.

It is found in the secreted. The catalysed reaction is Hydrolysis of terminal, non-reducing beta-D-glucosyl residues with release of beta-D-glucose.. It participates in glycan metabolism; cellulose degradation. In terms of biological role, beta-glucosidases are one of a number of cellulolytic enzymes involved in the degradation of cellulosic biomass. Catalyzes the last step releasing glucose from the inhibitory cellobiose. This is Probable beta-glucosidase H (bglH) from Aspergillus flavus (strain ATCC 200026 / FGSC A1120 / IAM 13836 / NRRL 3357 / JCM 12722 / SRRC 167).